A 308-amino-acid chain; its full sequence is Testis-specific Y-encoded protein 1 (308 aa).

This sequence belongs to the nucleosome assembly protein (NAP) family. Post-translationally, phosphorylated. In terms of tissue distribution, specifically expressed in testicular tissues. Isoform 1 and isoform 2 are expressed in spermatogonia and spermatocytes. Found in early testicular carcinoma in situ, spermatogonial cells in testicular tissues of 46,X,Y female and in prostate cancer cell lines.

It localises to the cytoplasm. It is found in the nucleus. May be involved in sperm differentiation and proliferation. This chain is Testis-specific Y-encoded protein 1 (TSPY1), found in Homo sapiens (Human).